The sequence spans 361 residues: Salt tolerance receptor-like cytoplasmic kinase 1 (361 aa).

Residues Cys-5, Cys-10, and Cys-14 are each lipidated (S-palmitoyl cysteine). Residues 67-347 form the Protein kinase domain; the sequence is GFSSRVIGHG…RALQEKTSAL (281 aa). Residues 73 to 81 and Lys-95 each bind ATP; that span reads IGHGGFSTV. Asp-195 acts as the Proton acceptor in catalysis.

It belongs to the protein kinase superfamily. Ser/Thr protein kinase family. Self-interacts. Interacts with CATA, CATB and CATC at the plasma membrane. Post-translationally, palmitoylated. Palmotylation at Cys-5, Cys-10 and Cys-14 by DHHC9 is required for plasma membrane targeting and STRK1 function. In terms of processing, autophosphorylated. As to expression, accumulates in seeds. Mainly expressed in young roots, and, to a lower extent, in leaf veins, seedlings, stems, leaf sheath and young spikelet.

The protein resides in the cell membrane. The catalysed reaction is L-seryl-[protein] + ATP = O-phospho-L-seryl-[protein] + ADP + H(+). The enzyme catalyses L-threonyl-[protein] + ATP = O-phospho-L-threonyl-[protein] + ADP + H(+). It catalyses the reaction L-tyrosyl-[protein] + ATP = O-phospho-L-tyrosyl-[protein] + ADP + H(+). In terms of biological role, acts probably as a dual specificity protein kinase. Regulates hydrogen peroxide (H(2)O(2)) homeostasis and improves salt tolerance by phosphorylating tyrosine residues of CATC thus activating its catalase activity. Promotes growth at the seedling stage and prevents grain yield loss under salt stress conditions. The chain is Salt tolerance receptor-like cytoplasmic kinase 1 from Oryza sativa subsp. japonica (Rice).